The sequence spans 385 residues: Polyketide synthase 1 (385 aa).

Cys157 is a catalytic residue.

Belongs to the thiolase-like superfamily. Chalcone/stilbene synthases family. In terms of tissue distribution, expressed in glandular trichomes.

It localises to the cytoplasm. In terms of biological role, polyketide synthase responsible for the biosynthesis of secondary metabolites. The polypeptide is Polyketide synthase 1 (PKSG1) (Cannabis sativa (Hemp)).